A 1530-amino-acid polypeptide reads, in one-letter code: B-cell CLL/lymphoma 9-like protein (1530 aa).

Disordered stretches follow at residues 1–101 (MHSE…VLEP), 155–187 (QGHS…TDLH), 246–353 (HISS…PSVL), 398–439 (SGTG…IGGG), 473–503 (QTQN…LSSP), 821–1076 (QNGR…QNPL), 1250–1279 (KGMS…SEVI), and 1310–1331 (SETM…QVSS). Residues 8–18 (SNHGKQVTSGA) are compositionally biased toward polar residues. Over residues 19 to 34 (QSQLPNVNQAQQQAPA) the composition is skewed to low complexity. Over residues 81–93 (ERSVSIDTGDQRE) the composition is skewed to basic and acidic residues. Residues 156–165 (GHSGSSTTGH) are compositionally biased toward low complexity. Gly residues predominate over residues 170–180 (GGPGLGSGHGP). 2 stretches are compositionally biased toward polar residues: residues 247–264 (ISSS…QSGT) and 278–287 (GTSTPSSTGH). 2 stretches are compositionally biased toward low complexity: residues 409–426 (GPNG…NSND) and 485–503 (SLMG…LSSP). 3 stretches are compositionally biased toward polar residues: residues 875–891 (LSST…TGSR), 920–930 (QLKSPSLSQEP), and 944–953 (SPSQLPQSGP). Low complexity-rich tracts occupy residues 960 to 971 (AASGAGTPSSTS), 979 to 994 (GPSL…PGHL), and 1031 to 1060 (SSST…INPS). Residues 1258 to 1268 (PHQPDSFPPMP) are compositionally biased toward pro residues.

This sequence belongs to the BCL9 family.

Its subcellular location is the nucleus. Functionally, transcriptional regulator that may act as an activator. Plays a role for mesoderm patterning in early embryogenesis. This chain is B-cell CLL/lymphoma 9-like protein (bcl9l), found in Danio rerio (Zebrafish).